The chain runs to 107 residues: Nucleoid-associated protein GOX0603 (107 aa).

Belongs to the YbaB/EbfC family. As to quaternary structure, homodimer.

It is found in the cytoplasm. Its subcellular location is the nucleoid. In terms of biological role, binds to DNA and alters its conformation. May be involved in regulation of gene expression, nucleoid organization and DNA protection. This chain is Nucleoid-associated protein GOX0603, found in Gluconobacter oxydans (strain 621H) (Gluconobacter suboxydans).